Reading from the N-terminus, the 235-residue chain is (5-formylfuran-3-yl)methyl phosphate synthase (235 aa).

Lysine 27 acts as the Schiff-base intermediate with substrate in catalysis. Lysine 85 serves as the catalytic Proton acceptor.

The protein belongs to the MfnB family. As to quaternary structure, homohexamer. Trimer of dimers.

It carries out the reaction 2 D-glyceraldehyde 3-phosphate = 4-(hydroxymethyl)-2-furancarboxaldehyde phosphate + phosphate + 2 H2O. It functions in the pathway cofactor biosynthesis; methanofuran biosynthesis. Its function is as follows. Catalyzes the formation of 4-(hydroxymethyl)-2-furancarboxaldehyde phosphate (4-HFC-P) from two molecules of glyceraldehyde-3-P (GA-3-P). This is (5-formylfuran-3-yl)methyl phosphate synthase from Methanocaldococcus jannaschii (strain ATCC 43067 / DSM 2661 / JAL-1 / JCM 10045 / NBRC 100440) (Methanococcus jannaschii).